Consider the following 354-residue polypeptide: Alkanal monooxygenase alpha chain (354 aa).

This sequence belongs to the bacterial luciferase oxidoreductase family. In terms of assembly, heterodimer of an alpha and a beta chain.

It carries out the reaction a long-chain fatty aldehyde + FMNH2 + O2 = a long-chain fatty acid + hnu + FMN + H2O + 2 H(+). In terms of biological role, light-emitting reaction in luminous bacteria. The chain is Alkanal monooxygenase alpha chain (luxA) from Aliivibrio fischeri (Vibrio fischeri).